Here is a 120-residue protein sequence, read N- to C-terminus: MFYWILLALAIVAEITGTLSMKWASVGNGNAGYILMLVMITLSYIFLSFAVKKIALGVAYALWEGIGILFITVFSVLLFDEVLSTMKIVGLLTLIVGIVLIKSGTRKPGKPVKEATRATI.

4 consecutive transmembrane segments (helical) span residues Met-1 to Met-21, Ala-31 to Val-51, Ile-54 to Phe-74, and Glu-81 to Ile-101.

It belongs to the drug/metabolite transporter (DMT) superfamily. Small multidrug resistance (SMR) (TC 2.A.7.1) family. MdtJ subfamily. In terms of assembly, forms a complex with MdtI.

Its subcellular location is the cell inner membrane. In terms of biological role, catalyzes the excretion of spermidine. The protein is Spermidine export protein MdtJ of Salmonella arizonae (strain ATCC BAA-731 / CDC346-86 / RSK2980).